The chain runs to 272 residues: Bis(5'-nucleosyl)-tetraphosphatase, symmetrical (272 aa).

Belongs to the Ap4A hydrolase family.

It catalyses the reaction P(1),P(4)-bis(5'-adenosyl) tetraphosphate + H2O = 2 ADP + 2 H(+). Hydrolyzes diadenosine 5',5'''-P1,P4-tetraphosphate to yield ADP. The polypeptide is Bis(5'-nucleosyl)-tetraphosphatase, symmetrical (Shewanella frigidimarina (strain NCIMB 400)).